We begin with the raw amino-acid sequence, 182 residues long: Prorelaxin (182 aa).

The N-terminal stretch at 1–24 is a signal peptide; sequence MPRLFSYLLGVWLLLSQLPREIPG. Gln-25 bears the Pyrrolidone carboxylic acid mark. Cystine bridges form between Cys-34-Cys-169, Cys-46-Cys-182, and Cys-168-Cys-173. A propeptide spans 57-154 (connecting peptide); it reads SLEEPQLETG…LKNLGLDKHS (98 aa). The propeptide occupies 159 to 160; sequence LF.

It belongs to the insulin family. In terms of assembly, heterodimer of a B chain and an A chain linked by two disulfide bonds.

The protein resides in the secreted. Its function is as follows. Relaxin is an ovarian hormone that acts with estrogen to produce dilatation of the birth canal in many mammals. This chain is Prorelaxin (RLN), found in Sus scrofa (Pig).